The sequence spans 62 residues: Photosystem II reaction center protein K (62 aa).

A propeptide spanning residues 1 to 25 (MPNILSLTCICFNSVLYPTTSFFFA) is cleaved from the precursor. The helical transmembrane segment at 33–53 (IFNPIVDVMPVIPLFFFLLAF) threads the bilayer.

The protein belongs to the PsbK family. As to quaternary structure, PSII is composed of 1 copy each of membrane proteins PsbA, PsbB, PsbC, PsbD, PsbE, PsbF, PsbH, PsbI, PsbJ, PsbK, PsbL, PsbM, PsbT, PsbX, PsbY, PsbZ, Psb30/Ycf12, at least 3 peripheral proteins of the oxygen-evolving complex and a large number of cofactors. It forms dimeric complexes.

It localises to the plastid. The protein resides in the chloroplast thylakoid membrane. Its function is as follows. One of the components of the core complex of photosystem II (PSII). PSII is a light-driven water:plastoquinone oxidoreductase that uses light energy to abstract electrons from H(2)O, generating O(2) and a proton gradient subsequently used for ATP formation. It consists of a core antenna complex that captures photons, and an electron transfer chain that converts photonic excitation into a charge separation. The sequence is that of Photosystem II reaction center protein K from Agrostis stolonifera (Creeping bentgrass).